Reading from the N-terminus, the 309-residue chain is Homoserine kinase (309 aa).

91–101 provides a ligand contact to ATP; that stretch reads PVGSGLGSSAC.

Belongs to the GHMP kinase family. Homoserine kinase subfamily.

It is found in the cytoplasm. It catalyses the reaction L-homoserine + ATP = O-phospho-L-homoserine + ADP + H(+). It functions in the pathway amino-acid biosynthesis; L-threonine biosynthesis; L-threonine from L-aspartate: step 4/5. Functionally, catalyzes the ATP-dependent phosphorylation of L-homoserine to L-homoserine phosphate. In Hamiltonella defensa subsp. Acyrthosiphon pisum (strain 5AT), this protein is Homoserine kinase.